The primary structure comprises 126 residues: Small ribosomal subunit protein uS13 (126 aa).

Positions 98 to 126 (PVRGQSTKNNARTRKGRKKTVANKKKATK) are disordered. Positions 108 to 126 (ARTRKGRKKTVANKKKATK) are enriched in basic residues.

This sequence belongs to the universal ribosomal protein uS13 family. In terms of assembly, part of the 30S ribosomal subunit. Forms a loose heterodimer with protein S19. Forms two bridges to the 50S subunit in the 70S ribosome.

Its function is as follows. Located at the top of the head of the 30S subunit, it contacts several helices of the 16S rRNA. In the 70S ribosome it contacts the 23S rRNA (bridge B1a) and protein L5 of the 50S subunit (bridge B1b), connecting the 2 subunits; these bridges are implicated in subunit movement. Contacts the tRNAs in the A and P-sites. This is Small ribosomal subunit protein uS13 from Bacteroides fragilis (strain ATCC 25285 / DSM 2151 / CCUG 4856 / JCM 11019 / LMG 10263 / NCTC 9343 / Onslow / VPI 2553 / EN-2).